A 483-amino-acid chain; its full sequence is ATP-dependent protease ATPase subunit HslU (483 aa).

Residues Val-18 and 60–65 (GVGKTE) each bind ATP. Low complexity-rich tracts occupy residues 136-147 (LPGGAPQPAPAQ) and 171-181 (AQADASQASPP). The disordered stretch occupies residues 136–212 (LPGGAPQPAP…HGGKLDDREV (77 aa)). Polar residues predominate over residues 182–191 (TGTGSAPDSR). Basic and acidic residues predominate over residues 192–209 (SSTREKLRTLWHGGKLDD). Asp-296, Glu-361, and Arg-433 together coordinate ATP.

The protein belongs to the ClpX chaperone family. HslU subfamily. A double ring-shaped homohexamer of HslV is capped on each side by a ring-shaped HslU homohexamer. The assembly of the HslU/HslV complex is dependent on binding of ATP.

It is found in the cytoplasm. In terms of biological role, ATPase subunit of a proteasome-like degradation complex; this subunit has chaperone activity. The binding of ATP and its subsequent hydrolysis by HslU are essential for unfolding of protein substrates subsequently hydrolyzed by HslV. HslU recognizes the N-terminal part of its protein substrates and unfolds these before they are guided to HslV for hydrolysis. The polypeptide is ATP-dependent protease ATPase subunit HslU (Nitratidesulfovibrio vulgaris (strain DSM 19637 / Miyazaki F) (Desulfovibrio vulgaris)).